Consider the following 40-residue polypeptide: uncharacterized protein (40 aa).

This is an uncharacterized protein from Acheta domesticus (House cricket).